A 313-amino-acid polypeptide reads, in one-letter code: Porphobilinogen deaminase (313 aa).

Residue Cys242 is modified to S-(dipyrrolylmethanemethyl)cysteine.

Belongs to the HMBS family. As to quaternary structure, monomer. Dipyrromethane serves as cofactor.

The enzyme catalyses 4 porphobilinogen + H2O = hydroxymethylbilane + 4 NH4(+). It participates in porphyrin-containing compound metabolism; protoporphyrin-IX biosynthesis; coproporphyrinogen-III from 5-aminolevulinate: step 2/4. Its function is as follows. Tetrapolymerization of the monopyrrole PBG into the hydroxymethylbilane pre-uroporphyrinogen in several discrete steps. The sequence is that of Porphobilinogen deaminase from Escherichia coli (strain SE11).